Here is a 264-residue protein sequence, read N- to C-terminus: MTLEILLVNDDGIYSNGLLALKNVLSSEFDANVTVVAPTNQQSGIGRAISFFEPLRITKTKLSDCSEGYAVSGTPSDCVVLGIYQVLKKVPDFVISGINIGENLGTEITTSGTLGAAFEGSHHGAKAFACSLQVTADHLKFKEGESPIEFLNAANVFKKVFEKFLDSEFPCDVLNVNIPEDATLNTPVEITKLAKKMYTTHVEERIDPRSRSYYWIDGYPIMEEEDGTDVYAIRRKKHVSLTPLTLDTTIKNIELFQEIYKKKF.

A divalent metal cation contacts are provided by aspartate 10, aspartate 11, serine 43, and asparagine 99.

This sequence belongs to the SurE nucleotidase family. Requires a divalent metal cation as cofactor.

It localises to the cytoplasm. It catalyses the reaction a ribonucleoside 5'-phosphate + H2O = a ribonucleoside + phosphate. Its function is as follows. Nucleotidase that shows phosphatase activity on nucleoside 5'-monophosphates. The polypeptide is 5'-nucleotidase SurE (Methanococcus vannielii (strain ATCC 35089 / DSM 1224 / JCM 13029 / OCM 148 / SB)).